Reading from the N-terminus, the 346-residue chain is Protein RecA (346 aa).

67–74 (GPESSGKT) is an ATP binding site.

The protein belongs to the RecA family.

It localises to the cytoplasm. Functionally, can catalyze the hydrolysis of ATP in the presence of single-stranded DNA, the ATP-dependent uptake of single-stranded DNA by duplex DNA, and the ATP-dependent hybridization of homologous single-stranded DNAs. It interacts with LexA causing its activation and leading to its autocatalytic cleavage. In Mycobacteroides abscessus (strain ATCC 19977 / DSM 44196 / CCUG 20993 / CIP 104536 / JCM 13569 / NCTC 13031 / TMC 1543 / L948) (Mycobacterium abscessus), this protein is Protein RecA.